The following is a 230-amino-acid chain: UPF0500 protein C1orf216 homolog (230 aa).

The tract at residues 1 to 103 is disordered; it reads MFAAIQPGLA…AEPEKLSGAS (103 aa). The span at 60-73 shows a compositional bias: polar residues; that stretch reads RSSSESPSDNQVFQ. The span at 85-94 shows a compositional bias: low complexity; sequence PPEGAEIPGA.

This sequence belongs to the UPF0500 family.

The polypeptide is UPF0500 protein C1orf216 homolog (Mus musculus (Mouse)).